A 237-amino-acid chain; its full sequence is 1-(5-phosphoribosyl)-5-[(5-phosphoribosylamino)methylideneamino] imidazole-4-carboxamide isomerase (237 aa).

The active-site Proton acceptor is aspartate 8. The active-site Proton donor is aspartate 129.

It belongs to the HisA/HisF family.

The protein resides in the cytoplasm. The catalysed reaction is 1-(5-phospho-beta-D-ribosyl)-5-[(5-phospho-beta-D-ribosylamino)methylideneamino]imidazole-4-carboxamide = 5-[(5-phospho-1-deoxy-D-ribulos-1-ylimino)methylamino]-1-(5-phospho-beta-D-ribosyl)imidazole-4-carboxamide. The protein operates within amino-acid biosynthesis; L-histidine biosynthesis; L-histidine from 5-phospho-alpha-D-ribose 1-diphosphate: step 4/9. This Roseiflexus castenholzii (strain DSM 13941 / HLO8) protein is 1-(5-phosphoribosyl)-5-[(5-phosphoribosylamino)methylideneamino] imidazole-4-carboxamide isomerase.